Here is a 344-residue protein sequence, read N- to C-terminus: N-lysine methyltransferase KMT5A-A (344 aa).

The disordered stretch occupies residues 143-176; sequence TSSKHRKPARRKVKRSTKRAAESKSPANRKVTDY. Positions 145 to 160 are enriched in basic residues; it reads SKHRKPARRKVKRSTK. The 122-residue stretch at 208-329 folds into the SET domain; sequence DGMMVRFIEG…EGEELLYDYG (122 aa). S-adenosyl-L-methionine contacts are provided by residues 218 to 220, Y263, and 290 to 291; these read KGR and NH.

The protein belongs to the class V-like SAM-binding methyltransferase superfamily. Histone-lysine methyltransferase family. PR/SET subfamily.

Its subcellular location is the nucleus. It localises to the chromosome. It carries out the reaction L-lysyl(20)-[histone H4] + S-adenosyl-L-methionine = N(6)-methyl-L-lysyl(20)-[histone H4] + S-adenosyl-L-homocysteine + H(+). The enzyme catalyses L-lysyl-[protein] + S-adenosyl-L-methionine = N(6)-methyl-L-lysyl-[protein] + S-adenosyl-L-homocysteine + H(+). Protein-lysine N-methyltransferase that monomethylates both histones and non-histone proteins. Specifically monomethylates 'Lys-20' of histone H4 (H4K20me1). H4K20me1 is enriched during mitosis and represents a specific tag for epigenetic transcriptional repression. Mainly functions in euchromatin regions, thereby playing a central role in the silencing of euchromatic genes. Required for cell proliferation, probably by contributing to the maintenance of proper higher-order structure of DNA during mitosis. Involved in chromosome condensation and proper cytokinesis. The sequence is that of N-lysine methyltransferase KMT5A-A from Danio rerio (Zebrafish).